We begin with the raw amino-acid sequence, 231 residues long: NADH-ubiquinone oxidoreductase chain 4 (231 aa).

The next 7 membrane-spanning stretches (helical) occupy residues P1–I21, L34–L54, S61–I80, W84–L106, I118–L138, L156–S176, and L211–I231.

Belongs to the complex I subunit 4 family.

The protein localises to the mitochondrion membrane. It catalyses the reaction a ubiquinone + NADH + 5 H(+)(in) = a ubiquinol + NAD(+) + 4 H(+)(out). In terms of biological role, core subunit of the mitochondrial membrane respiratory chain NADH dehydrogenase (Complex I) that is believed to belong to the minimal assembly required for catalysis. Complex I functions in the transfer of electrons from NADH to the respiratory chain. The immediate electron acceptor for the enzyme is believed to be ubiquinone. In Hypnale hypnale (Merrem's hump-nosed viper), this protein is NADH-ubiquinone oxidoreductase chain 4 (MT-ND4).